Here is a 95-residue protein sequence, read N- to C-terminus: Aspartyl/glutamyl-tRNA(Asn/Gln) amidotransferase subunit C (95 aa).

Belongs to the GatC family. In terms of assembly, heterotrimer of A, B and C subunits.

It catalyses the reaction L-glutamyl-tRNA(Gln) + L-glutamine + ATP + H2O = L-glutaminyl-tRNA(Gln) + L-glutamate + ADP + phosphate + H(+). The enzyme catalyses L-aspartyl-tRNA(Asn) + L-glutamine + ATP + H2O = L-asparaginyl-tRNA(Asn) + L-glutamate + ADP + phosphate + 2 H(+). Functionally, allows the formation of correctly charged Asn-tRNA(Asn) or Gln-tRNA(Gln) through the transamidation of misacylated Asp-tRNA(Asn) or Glu-tRNA(Gln) in organisms which lack either or both of asparaginyl-tRNA or glutaminyl-tRNA synthetases. The reaction takes place in the presence of glutamine and ATP through an activated phospho-Asp-tRNA(Asn) or phospho-Glu-tRNA(Gln). The sequence is that of Aspartyl/glutamyl-tRNA(Asn/Gln) amidotransferase subunit C from Rhizobium leguminosarum bv. trifolii (strain WSM2304).